Here is a 353-residue protein sequence, read N- to C-terminus: MHLTIMRRFAVLLLLAIFLGGCSGSNGAAEEKWKMKVIWHVDTSGEPFMDLSPDGELAAAVDWNNAKIYLVKPDGESVVFDIQGQDAVKPVVSGVALKDGVAYVLGSYEDFVGIRKYSWNGEVGEERHGWAGSVSDNILRSPSGNHLCYLITIDAGKQELYCDGVKMTLGGDYYFLNSVSDSGVVVISSGDGTHVFKEGNEVLSFNTSNVVAYKDRVLVNEEDFLRVYDLSGNLVGEKEGYTFSLTTLLRWTLLPTERYIFRYEPLEDTHVITWDIKQVETLPGFPQFANDHFVVTSKNGVLHCYSLKDFHEVFSVEMPEDDGLIKLSDDGRVMLVSGENGGYWLYVSSENNF.

An N-terminal signal peptide occupies residues 1 to 28; the sequence is MHLTIMRRFAVLLLLAIFLGGCSGSNGA.

This is an uncharacterized protein from Archaeoglobus fulgidus (strain ATCC 49558 / DSM 4304 / JCM 9628 / NBRC 100126 / VC-16).